We begin with the raw amino-acid sequence, 90 residues long: Antitoxin epsilon 1 (90 aa).

It belongs to the epsilon antitoxin family. As to quaternary structure, in the presence of the zeta toxin, forms an inactive PezA(2)PezT(2) heterotetramer.

Functionally, antitoxin component of a type II toxin-antitoxin (TA) system. Neutralizes the toxic effect of zeta toxin. Part of a postsegregational killing (PSK) system involved in the killing of plasmid-free cells. Continuous synthesis of the epsilon antitoxin is required to counteract the zeta toxin. This is Antitoxin epsilon 1 from Enterococcus faecalis (Streptococcus faecalis).